A 360-amino-acid chain; its full sequence is Josephin-like protein (360 aa).

One can recognise a Josephin domain in the interval 5–192 (ESKIYHERQR…NQLPLASNYR (188 aa)). Catalysis depends on Cys-18, which acts as the Nucleophile. The Proton acceptor role is filled by His-129.

It catalyses the reaction Thiol-dependent hydrolysis of ester, thioester, amide, peptide and isopeptide bonds formed by the C-terminal Gly of ubiquitin (a 76-residue protein attached to proteins as an intracellular targeting signal).. May act as a deubiquitinating enzyme. The sequence is that of Josephin-like protein from Arabidopsis thaliana (Mouse-ear cress).